Consider the following 605-residue polypeptide: Beta-conglycinin alpha subunit 1 (605 aa).

Positions 1 to 22 (MMRARFPLLLLGLVFLASVSVS) are cleaved as a signal peptide. Residues 23 to 62 (FGIAYWEKENPKHNKCLQSCNSERDSYRNQACHARCNLLK) constitute a propeptide that is removed on maturation. Positions 65-195 (KEECEEGEIP…ELRRHKNKNP (131 aa)) are disordered. Basic and acidic residues predominate over residues 111-136 (PRQEEEHEQREEQEWPRKEEKRGEKG). Composition is skewed to acidic residues over residues 137 to 149 (SEEEDEDEDEEQD) and 169 to 184 (EDEDEEQQRESEESED). 2 consecutive Cupin type-1 domains span residues 196–354 (FLFG…EEIN) and 406–567 (FNLR…QAVE). N-linked (GlcNAc...) asparagine glycosylation is found at Asn-261 and Asn-517.

The protein belongs to the 7S seed storage protein family. In terms of assembly, the alpha-, alpha'-, and beta-subunits associate in various combinations to form trimeric proteins.

The protein localises to the vacuole. It localises to the aleurone grain. It is found in the endoplasmic reticulum. Its subcellular location is the protein storage vacuole. Functionally, seed storage protein. Accumulates during seed development and is hydrolyzed after germination to provide a carbon and nitrogen source for the developing seedling. The chain is Beta-conglycinin alpha subunit 1 from Glycine max (Soybean).